The following is a 156-amino-acid chain: Putative pre-16S rRNA nuclease (156 aa).

This sequence belongs to the YqgF nuclease family.

It localises to the cytoplasm. Could be a nuclease involved in processing of the 5'-end of pre-16S rRNA. The protein is Putative pre-16S rRNA nuclease of Ehrlichia ruminantium (strain Gardel).